The following is a 256-amino-acid chain: Imidazole glycerol phosphate synthase subunit HisF (256 aa).

Active-site residues include Asp-11 and Asp-130.

Belongs to the HisA/HisF family. As to quaternary structure, heterodimer of HisH and HisF.

The protein localises to the cytoplasm. It catalyses the reaction 5-[(5-phospho-1-deoxy-D-ribulos-1-ylimino)methylamino]-1-(5-phospho-beta-D-ribosyl)imidazole-4-carboxamide + L-glutamine = D-erythro-1-(imidazol-4-yl)glycerol 3-phosphate + 5-amino-1-(5-phospho-beta-D-ribosyl)imidazole-4-carboxamide + L-glutamate + H(+). Its pathway is amino-acid biosynthesis; L-histidine biosynthesis; L-histidine from 5-phospho-alpha-D-ribose 1-diphosphate: step 5/9. Functionally, IGPS catalyzes the conversion of PRFAR and glutamine to IGP, AICAR and glutamate. The HisF subunit catalyzes the cyclization activity that produces IGP and AICAR from PRFAR using the ammonia provided by the HisH subunit. The polypeptide is Imidazole glycerol phosphate synthase subunit HisF (Methylocella silvestris (strain DSM 15510 / CIP 108128 / LMG 27833 / NCIMB 13906 / BL2)).